The primary structure comprises 217 residues: Small ribosomal subunit protein uS3 (217 aa).

In terms of domain architecture, KH type-2 spans 40-110; sequence IRDVINKGFN…EVYINIHEVR (71 aa).

The protein belongs to the universal ribosomal protein uS3 family. As to quaternary structure, part of the 30S ribosomal subunit. Forms a tight complex with proteins S10 and S14.

Its function is as follows. Binds the lower part of the 30S subunit head. Binds mRNA in the 70S ribosome, positioning it for translation. This chain is Small ribosomal subunit protein uS3, found in Rickettsia massiliae (strain Mtu5).